The primary structure comprises 155 residues: Interleukin-2 (155 aa).

Positions 1 to 20 (MYSMQLASCVALTLVLLVNS) are cleaved as a signal peptide. A glycan (O-linked (GalNAc...) threonine) is linked at Thr-23. Cys-78 and Cys-126 are disulfide-bonded.

This sequence belongs to the IL-2 family.

Its subcellular location is the secreted. In terms of biological role, cytokine produced by activated CD4-positive helper T-cells and to a lesser extend activated CD8-positive T-cells and natural killer (NK) cells that plays pivotal roles in the immune response and tolerance. Binds to a receptor complex composed of either the high-affinity trimeric IL-2R (IL2RA/CD25, IL2RB/CD122 and IL2RG/CD132) or the low-affinity dimeric IL-2R (IL2RB and IL2RG). Interaction with the receptor leads to oligomerization and conformation changes in the IL-2R subunits resulting in downstream signaling starting with phosphorylation of JAK1 and JAK3. In turn, JAK1 and JAK3 phosphorylate the receptor to form a docking site leading to the phosphorylation of several substrates including STAT5. This process leads to activation of several pathways including STAT, phosphoinositide-3-kinase/PI3K and mitogen-activated protein kinase/MAPK pathways. Functions as a T-cell growth factor and can increase NK-cell cytolytic activity as well. Promotes strong proliferation of activated B-cells and subsequently immunoglobulin production. Plays a pivotal role in regulating the adaptive immune system by controlling the survival and proliferation of regulatory T-cells, which are required for the maintenance of immune tolerance. Moreover, participates in the differentiation and homeostasis of effector T-cell subsets, including Th1, Th2, Th17 as well as memory CD8-positive T-cells. In Rattus norvegicus (Rat), this protein is Interleukin-2 (Il2).